We begin with the raw amino-acid sequence, 285 residues long: Probable endonuclease 4 (285 aa).

The Zn(2+) site is built by His-69, His-109, Glu-145, Asp-179, His-182, His-216, Asp-229, His-231, and Glu-261.

It belongs to the AP endonuclease 2 family. Zn(2+) is required as a cofactor.

It carries out the reaction Endonucleolytic cleavage to 5'-phosphooligonucleotide end-products.. In terms of biological role, endonuclease IV plays a role in DNA repair. It cleaves phosphodiester bonds at apurinic or apyrimidinic (AP) sites, generating a 3'-hydroxyl group and a 5'-terminal sugar phosphate. The chain is Probable endonuclease 4 from Shigella flexneri serotype 5b (strain 8401).